The primary structure comprises 124 residues: Iron-sulfur cluster insertion protein ErpA (124 aa).

3 residues coordinate iron-sulfur cluster: C52, C116, and C118.

Belongs to the HesB/IscA family. In terms of assembly, homodimer. Requires iron-sulfur cluster as cofactor.

Required for insertion of 4Fe-4S clusters for at least IspG. The sequence is that of Iron-sulfur cluster insertion protein ErpA from Vibrio atlanticus (strain LGP32) (Vibrio splendidus (strain Mel32)).